The sequence spans 453 residues: UPF0210 protein Mbur_0828 (453 aa).

Belongs to the UPF0210 family.

This chain is UPF0210 protein Mbur_0828, found in Methanococcoides burtonii (strain DSM 6242 / NBRC 107633 / OCM 468 / ACE-M).